Here is a 417-residue protein sequence, read N- to C-terminus: UDP-N-acetylglucosamine 1-carboxyvinyltransferase (417 aa).

23–24 (KN) is a binding site for phosphoenolpyruvate. Arg-93 lines the UDP-N-acetyl-alpha-D-glucosamine pocket. Asp-117 functions as the Proton donor in the catalytic mechanism. Asp-305 and Val-327 together coordinate UDP-N-acetyl-alpha-D-glucosamine.

It belongs to the EPSP synthase family. MurA subfamily.

It is found in the cytoplasm. The catalysed reaction is phosphoenolpyruvate + UDP-N-acetyl-alpha-D-glucosamine = UDP-N-acetyl-3-O-(1-carboxyvinyl)-alpha-D-glucosamine + phosphate. It functions in the pathway cell wall biogenesis; peptidoglycan biosynthesis. Functionally, cell wall formation. Adds enolpyruvyl to UDP-N-acetylglucosamine. The chain is UDP-N-acetylglucosamine 1-carboxyvinyltransferase from Mycolicibacterium paratuberculosis (strain ATCC BAA-968 / K-10) (Mycobacterium paratuberculosis).